We begin with the raw amino-acid sequence, 154 residues long: Superoxide dismutase [Cu-Zn] (154 aa).

His-47, His-49, and His-64 together coordinate Cu cation. A disulfide bond links Cys-58 and Cys-147. Residues His-64, His-72, His-81, and Asp-84 each coordinate Zn(2+). His-121 contributes to the Cu cation binding site. Basic and acidic residues predominate over residues 125 to 137 (DDLGRSEHPESKK). The tract at residues 125–144 (DDLGRSEHPESKKTGNAGAR) is disordered. Substrate is bound at residue Arg-144.

It belongs to the Cu-Zn superoxide dismutase family. In terms of assembly, homodimer. Cu cation is required as a cofactor. Zn(2+) serves as cofactor.

It is found in the cytoplasm. The enzyme catalyses 2 superoxide + 2 H(+) = H2O2 + O2. Functionally, destroys radicals which are normally produced within the cells and which are toxic to biological systems. This Aspergillus oryzae (strain ATCC 42149 / RIB 40) (Yellow koji mold) protein is Superoxide dismutase [Cu-Zn] (sodC).